Here is a 1118-residue protein sequence, read N- to C-terminus: Error-prone DNA polymerase (1118 aa).

The interval 1071–1118 is disordered; the sequence is GPQPMGYAKEVGSDRRSRPEIGNAPARQDLATLSEEAEQVMPKGRNFQ.

The protein belongs to the DNA polymerase type-C family. DnaE2 subfamily.

It localises to the cytoplasm. It catalyses the reaction DNA(n) + a 2'-deoxyribonucleoside 5'-triphosphate = DNA(n+1) + diphosphate. Functionally, DNA polymerase involved in damage-induced mutagenesis and translesion synthesis (TLS). It is not the major replicative DNA polymerase. This Mesorhizobium japonicum (strain LMG 29417 / CECT 9101 / MAFF 303099) (Mesorhizobium loti (strain MAFF 303099)) protein is Error-prone DNA polymerase.